We begin with the raw amino-acid sequence, 553 residues long: Mucolipin-3 (553 aa).

At 1–62 (MADPEVVVSS…FWARGRKPWK (62 aa)) the chain is on the cytoplasmic side. The interaction with phosphoinositides stretch occupies residues 52 to 62 (KFWARGRKPWK). Residues 63–83 (LAIQILKIAMVTIQLVLFGLS) form a helical membrane-spanning segment. At 84–283 (NQMVVAFKEE…VSGSIQKNTH (200 aa)) the chain is on the extracellular side. The interval 104–118 (KGYMDRMDDTYAVYT) is extracellular/lumenal pore loop. N-linked (GlcNAc...) asparagine glycosylation is found at N138, N172, and N205. C159 and C185 are joined by a disulfide. Cysteines 238 and 269 form a disulfide. Residues 284 to 304 (YMMIFDAFVILTCLVSLILCI) form a helical membrane-spanning segment. Residues 305–341 (RSVIRGLQLQQEFVNFFLLHYKKEVSVSDQMEFVNGW) lie on the Cytoplasmic side of the membrane. Residues 342 to 362 (YIMIIISDILTIIGSILKMEI) traverse the membrane as a helical segment. Residues 363–371 (QAKSLTSYD) are Extracellular-facing. A helical membrane pass occupies residues 372–392 (VCSILLGTSTMLVWLGVIRYL). Residues 393-414 (GFFAKYNLLILTLQAALPNVIR) are Cytoplasmic-facing. The helical transmembrane segment at 415–435 (FCCCAAMIYLGYCFCGWIVLG) threads the bilayer. At 436–443 (PYHDKFRS) the chain is on the extracellular side. Residues 444–464 (LNMVSECLFSLINGDDMFATF) constitute an intramembrane region (pore-forming). The short motif at 456-459 (NGDD) is the Selectivity filter element. Over 465-475 (AKMQQKSYLVW) the chain is Extracellular. The helical transmembrane segment at 476 to 497 (LFSRIYLYSFISLFIYMILSLF) threads the bilayer. Topologically, residues 498–553 (IALITDTYETIKQYQQDGFPETELRTFISECKDLPNSGKYRLEDDPPVSLFCCCKK) are cytoplasmic.

This sequence belongs to the transient receptor (TC 1.A.4) family. Polycystin subfamily. MCOLN3 sub-subfamily. In terms of assembly, homotetramer. Can heterooligomerize with MCOLN1; heteromeric assemblies have different channel properties as compared to the respective homooligomers and may be tissue-specific. May heterooligomerize with TRPV5 to form a functional distinct ion channel. Interacts with GABARAPL2. In terms of processing, N-glycosylated.

Its subcellular location is the cell membrane. It is found in the early endosome membrane. The protein localises to the late endosome membrane. The protein resides in the lysosome membrane. It localises to the cytoplasmic vesicle. Its subcellular location is the autophagosome membrane. The enzyme catalyses Ca(2+)(in) = Ca(2+)(out). It catalyses the reaction K(+)(in) = K(+)(out). The catalysed reaction is Na(+)(in) = Na(+)(out). Channel activity is activated by PtdIns(3,5)P2 (phosphatidylinositol 3,5-bisphosphate). Inhibited by lumenal H(+) and Na(+). The channel pore shows dynamic behavior and undergoes spontaneous, Ca(2+)-dependent modulation when conducting Ca(2+). In terms of biological role, nonselective cation channel probably playing a role in the regulation of membrane trafficking events. Acts as a Ca(2+)-permeable cation channel with inwardly rectifying activity. Mediates release of Ca(2+) from endosomes to the cytoplasm, contributes to endosomal acidification and is involved in the regulation of membrane trafficking and fusion in the endosomal pathway. Also permeable to Mg(2+), Na(+) and K(+). Does not seem to act as mechanosensory transduction channel in inner ear sensory hair cells. Proposed to play a critical role at the cochlear stereocilia ankle-link region during hair-bundle growth. Involved in the regulation of autophagy. Through association with GABARAPL2 may be involved in autophagosome formation possibly providing Ca(2+) for the fusion process. Through a possible and probably tissue-specific heteromerization with MCOLN1 may be at least in part involved in many lysosome-dependent cellular events. Possible heteromeric ion channel assemblies with TRPV5 show pharmacological similarity with TRPML3. The chain is Mucolipin-3 (MCOLN3) from Homo sapiens (Human).